Consider the following 127-residue polypeptide: Glycine cleavage system H protein (127 aa).

The region spanning 24–105 (TALVGITDFA…YGEGWMVKMK (82 aa)) is the Lipoyl-binding domain. At Lys65 the chain carries N6-lipoyllysine.

This sequence belongs to the GcvH family. In terms of assembly, the glycine cleavage system is composed of four proteins: P, T, L and H. The cofactor is (R)-lipoate.

The glycine cleavage system catalyzes the degradation of glycine. The H protein shuttles the methylamine group of glycine from the P protein to the T protein. The protein is Glycine cleavage system H protein of Chlorobium phaeovibrioides (strain DSM 265 / 1930) (Prosthecochloris vibrioformis (strain DSM 265)).